The following is a 90-amino-acid chain: Small ribosomal subunit protein bS16 (90 aa).

It belongs to the bacterial ribosomal protein bS16 family.

The chain is Small ribosomal subunit protein bS16 from Streptococcus sanguinis (strain SK36).